Here is a 203-residue protein sequence, read N- to C-terminus: Urease accessory protein UreG (203 aa).

Residue 14-21 (GPVGSGKT) coordinates GTP.

Belongs to the SIMIBI class G3E GTPase family. UreG subfamily. In terms of assembly, homodimer. UreD, UreF and UreG form a complex that acts as a GTP-hydrolysis-dependent molecular chaperone, activating the urease apoprotein by helping to assemble the nickel containing metallocenter of UreC. The UreE protein probably delivers the nickel.

Its subcellular location is the cytoplasm. In terms of biological role, facilitates the functional incorporation of the urease nickel metallocenter. This process requires GTP hydrolysis, probably effectuated by UreG. This is Urease accessory protein UreG from Rhizobium meliloti (strain 1021) (Ensifer meliloti).